Reading from the N-terminus, the 2602-residue chain is Filamin-B (2602 aa).

The interval 1–239 (MPVTEKDLAE…VMTYLSQFPK (239 aa)) is actin-binding. Calponin-homology (CH) domains are found at residues 16–122 (KIQQ…LHYS) and 139–242 (QTPK…KAKL). Residue T216 is modified to Phosphothreonine. Residues 244-267 (PGAPLKPKLNPKKARAYGRGIEPT) form a disordered region. Filamin repeat units lie at residues 249–347 (KPKL…EVNV), 349–446 (KAQG…GVQI), 447–543 (GEAC…EVQV), 544–636 (GPEA…MAFI), 640–736 (TGDY…RVNI), 737–839 (GQGS…RVKV), 840–938 (DPSH…TVGV), 939–1034 (AAPL…TVEA), 1035–1127 (SLPP…KADI), 1128–1222 (EMPF…WVKV), 1223–1322 (EPAI…KVAV), 1323–1415 (TEGC…RVPS), 1416–1511 (KDVV…KVKV), 1512–1608 (LPTY…RIRA), and 1609–1704 (TQTG…TVMA). T519 carries the phosphothreonine modification. K681 bears the N6-acetyllysine mark. Position 730 is a phosphoserine (S730). Residues 837–850 (VKVDPSHDASKVKA) are compositionally biased toward basic and acidic residues. Residues 837–862 (VKVDPSHDASKVKAEGPGLSKAGVEN) are disordered. A phosphoserine mark is found at S886, S932, S983, and S1028. At T1307 the chain carries Phosphothreonine. Phosphoserine is present on S1316. Phosphoserine is present on residues S1433, S1505, and S1602. Residues 1705–1728 (TDGEVTAMEEAPVNACPPGFRPWV) are hinge 1. Filamin repeat units lie at residues 1729-1813 (TEEA…SPLQ), 1816-1908 (VNYP…TAKI), 1919-1994 (KLGS…SIMV), 1997-2089 (SEIG…TVKI), 2091-2185 (GEGR…QFTV), 2188-2280 (LGEG…LVPV), 2282-2375 (APSD…KVRV), and 2379-2471 (GQAG…KAKV). K1780 carries the post-translational modification N6-acetyllysine. Phosphoserine is present on residues S2083 and S2113. Phosphoserine occurs at positions 2369 and 2465. Residue K2468 forms a Glycyl lysine isopeptide (Lys-Gly) (interchain with G-Cter in ISG15) linkage. The tract at residues 2472–2506 (TGQRLVSPGSANETSSILVESVTRSSTETCYSAIP) is hinge 2. The interval 2472-2602 (TGQRLVSPGS…PGSPFHVTVP (131 aa)) is self-association site, tail. 3 positions are modified to phosphoserine: S2478, S2481, and S2492. The stretch at 2507 to 2601 (KSSSDASKVT…IPGSPFHVTV (95 aa)) is one Filamin 24 repeat. An N6-succinyllysine mark is found at K2518 and K2524. K2576 carries the N6-acetyllysine modification.

It belongs to the filamin family. In terms of assembly, homodimer. Interacts with FLNA, FLNC, INPPL1, ITGB1A, ITGB1D, ITGB3, ITGB6, MYOT, MYOZ1, PSEN1 and PSEN2. Interacts with MICALL2. Interacts with RFLNA and RFLNB. Interacts with ASB2 isoform 1; the interaction targets FLNB for proteasomal degradation. Post-translationally, ISGylation prevents ability to interact with the upstream activators of the JNK cascade and inhibits IFNA-induced JNK signaling. In terms of processing, ubiquitination by a SCF-like complex containing ASB2 isoform 1 leads to proteasomal degradation which promotes muscle differentiation. As to expression, expressed in hippocampus, cortex, cerebellar Purkinje cells and granule cell layers.

The protein resides in the cytoplasm. It is found in the cell cortex. Its subcellular location is the cytoskeleton. The protein localises to the stress fiber. It localises to the myofibril. The protein resides in the sarcomere. It is found in the z line. In terms of biological role, connects cell membrane constituents to the actin cytoskeleton. May promote orthogonal branching of actin filaments and links actin filaments to membrane glycoproteins. Anchors various transmembrane proteins to the actin cytoskeleton. The sequence is that of Filamin-B (Flnb) from Mus musculus (Mouse).